A 63-amino-acid chain; its full sequence is Race-specific elicitor A9 (63 aa).

The signal sequence occupies residues 1–23 (MKLSLLSVELALLIATTLPLCWA). Positions 24–35 (AALPVGLGVGLD) are excised as a propeptide. Cystine bridges form between Cys37-Cys51, Cys41-Cys54, and Cys47-Cys61.

Its function is as follows. This necrosis-inducing peptide induces a hypersensitive response on Cf-9 tomato genotypes. Race-specific elicitors are compounds which only induce defense responses in genotypes of host plants which are resistant to the pathogenic race that produces the elicitor, but not in susceptible genotypes. The protein is Race-specific elicitor A9 (AVR9) of Passalora fulva (Tomato leaf mold).